Reading from the N-terminus, the 325-residue chain is Acetyl-coenzyme A carboxylase carboxyl transferase subunit alpha (325 aa).

The CoA carboxyltransferase C-terminal domain occupies 38 to 292 (RLEERLSKLQ…DGILKETLKS (255 aa)).

The protein belongs to the AccA family. Acetyl-CoA carboxylase is a heterohexamer composed of biotin carboxyl carrier protein (AccB), biotin carboxylase (AccC) and two subunits each of ACCase subunit alpha (AccA) and ACCase subunit beta (AccD).

The protein resides in the cytoplasm. The catalysed reaction is N(6)-carboxybiotinyl-L-lysyl-[protein] + acetyl-CoA = N(6)-biotinyl-L-lysyl-[protein] + malonyl-CoA. It participates in lipid metabolism; malonyl-CoA biosynthesis; malonyl-CoA from acetyl-CoA: step 1/1. Component of the acetyl coenzyme A carboxylase (ACC) complex. First, biotin carboxylase catalyzes the carboxylation of biotin on its carrier protein (BCCP) and then the CO(2) group is transferred by the carboxyltransferase to acetyl-CoA to form malonyl-CoA. This Bacillus velezensis (strain DSM 23117 / BGSC 10A6 / LMG 26770 / FZB42) (Bacillus amyloliquefaciens subsp. plantarum) protein is Acetyl-coenzyme A carboxylase carboxyl transferase subunit alpha.